The chain runs to 270 residues: tRNA pseudouridine synthase A (270 aa).

The Nucleophile role is filled by Asp52. Tyr110 lines the substrate pocket.

The protein belongs to the tRNA pseudouridine synthase TruA family. As to quaternary structure, homodimer.

The catalysed reaction is uridine(38/39/40) in tRNA = pseudouridine(38/39/40) in tRNA. Formation of pseudouridine at positions 38, 39 and 40 in the anticodon stem and loop of transfer RNAs. The protein is tRNA pseudouridine synthase A of Paraburkholderia xenovorans (strain LB400).